The sequence spans 167 residues: NADH-quinone oxidoreductase subunit I 1 (167 aa).

2 4Fe-4S ferredoxin-type domains span residues Leu58–Glu88 and Thr98–Asn127. [4Fe-4S] cluster contacts are provided by Cys68, Cys71, Cys74, Cys78, Cys107, Cys110, Cys113, and Cys117.

Belongs to the complex I 23 kDa subunit family. NDH-1 is composed of 14 different subunits. Subunits NuoA, H, J, K, L, M, N constitute the membrane sector of the complex. The cofactor is [4Fe-4S] cluster.

It localises to the cell inner membrane. The catalysed reaction is a quinone + NADH + 5 H(+)(in) = a quinol + NAD(+) + 4 H(+)(out). Functionally, NDH-1 shuttles electrons from NADH, via FMN and iron-sulfur (Fe-S) centers, to quinones in the respiratory chain. The immediate electron acceptor for the enzyme in this species is believed to be ubiquinone. Couples the redox reaction to proton translocation (for every two electrons transferred, four hydrogen ions are translocated across the cytoplasmic membrane), and thus conserves the redox energy in a proton gradient. The polypeptide is NADH-quinone oxidoreductase subunit I 1 (Cereibacter sphaeroides (strain ATCC 17029 / ATH 2.4.9) (Rhodobacter sphaeroides)).